We begin with the raw amino-acid sequence, 317 residues long: Transaldolase 1 (317 aa).

Residue Lys132 is the Schiff-base intermediate with substrate of the active site.

This sequence belongs to the transaldolase family. Type 1 subfamily. As to quaternary structure, homodimer.

It localises to the cytoplasm. It carries out the reaction D-sedoheptulose 7-phosphate + D-glyceraldehyde 3-phosphate = D-erythrose 4-phosphate + beta-D-fructose 6-phosphate. It functions in the pathway carbohydrate degradation; pentose phosphate pathway; D-glyceraldehyde 3-phosphate and beta-D-fructose 6-phosphate from D-ribose 5-phosphate and D-xylulose 5-phosphate (non-oxidative stage): step 2/3. Its function is as follows. Transaldolase is important for the balance of metabolites in the pentose-phosphate pathway. In Salmonella paratyphi A (strain ATCC 9150 / SARB42), this protein is Transaldolase 1.